A 1242-amino-acid chain; its full sequence is Protein jagged-1a (1242 aa).

A signal peptide spans 1–28 (MILRPSATFAALSAHVLLRCLWMRVCEA). Topologically, residues 29 to 1070 (SGHFEMQVLS…KQPQNPNVDY (1042 aa)) are extracellular. A glycan (N-linked (GlcNAc...) asparagine) is linked at asparagine 141. The DSL domain occupies 186–230 (VTCDEHYFGFGCNKFCRPRDDFFGHYTCDHNGNKTCLEGWAGPEC). 2 disulfide bridges follow: cysteine 188–cysteine 197 and cysteine 201–cysteine 213. An N-linked (GlcNAc...) asparagine glycan is attached at asparagine 218. 39 disulfide bridges follow: cysteine 221–cysteine 230, cysteine 235–cysteine 246, cysteine 239–cysteine 252, cysteine 254–cysteine 263, cysteine 266–cysteine 277, cysteine 272–cysteine 283, cysteine 285–cysteine 294, cysteine 301–cysteine 313, cysteine 307–cysteine 323, cysteine 325–cysteine 334, cysteine 341–cysteine 352, cysteine 346–cysteine 361, cysteine 363–cysteine 372, cysteine 379–cysteine 390, cysteine 384–cysteine 399, cysteine 401–cysteine 410, cysteine 417–cysteine 428, cysteine 422–cysteine 437, cysteine 439–cysteine 448, cysteine 455–cysteine 465, cysteine 459–cysteine 474, cysteine 476–cysteine 485, cysteine 492–cysteine 503, cysteine 497–cysteine 512, cysteine 514–cysteine 523, cysteine 530–cysteine 541, cysteine 535–cysteine 550, cysteine 552–cysteine 561, cysteine 600–cysteine 618, cysteine 620–cysteine 629, cysteine 636–cysteine 647, cysteine 641–cysteine 656, cysteine 658–cysteine 667, cysteine 674–cysteine 685, cysteine 679–cysteine 694, cysteine 696–cysteine 705, cysteine 712–cysteine 723, cysteine 717–cysteine 732, and cysteine 734–cysteine 743. One can recognise an EGF-like 1 domain in the interval 231–264 (NTAICKQGCSIEHGSCKVPGNCRCLYGWQGEYCD). Residues 265-295 (QCIPHPGCVHGTCIEPWQCLCDTNWGGQLCD) enclose the EGF-like 2; atypical domain. 2 EGF-like domains span residues 297–335 (DLNT…QNCE) and 337–373 (ADNA…PSCN). The region spanning 375 to 411 (NEDDCSPNPCNHSGVCVDLVDGFKCICPVQWTGKTCL) is the EGF-like 5; calcium-binding domain. Asparagine 385 carries N-linked (GlcNAc...) asparagine glycosylation. The region spanning 413 to 449 (DANECEESPCVNAHSCRNLIGGYFCECLPGWTGQNCD) is the EGF-like 6; calcium-binding domain. In terms of domain architecture, EGF-like 7; calcium-binding spans 451 to 486 (NVNDCHGQCLNGGLCKDLVNGYRCVCAAGFAGDRCE). The region spanning 488-524 (DVDECASRPCLNGGRCQDTLNGFQCLCPPGFSGATCQ) is the EGF-like 8; calcium-binding domain. EGF-like domains are found at residues 526-562 (DLDY…KNCS) and 575-630 (VIDS…TYCH). The N-linked (GlcNAc...) asparagine glycan is linked to asparagine 560. The EGF-like 11; calcium-binding domain occupies 632-668 (NINDCESSPCLSGGTCIDKINAYQCICADGWEGPNCE). The 37-residue stretch at 670–706 (NIDDCRTNPCRDRGVCRDLVNDFYCECENGWKGKTCH) folds into the EGF-like 12; calcium-binding domain. 2 consecutive EGF-like domains span residues 708–744 (RESQ…ATCN) and 747–783 (KNSS…PTCS). Asparagine 748 carries an N-linked (GlcNAc...) asparagine glycan. Cystine bridges form between cysteine 751–cysteine 762, cysteine 756–cysteine 771, cysteine 773–cysteine 782, cysteine 789–cysteine 800, cysteine 794–cysteine 809, cysteine 811–cysteine 820, cysteine 827–cysteine 838, cysteine 832–cysteine 847, and cysteine 849–cysteine 858. Positions 785 to 821 (NSNDCNPQPCYNSGTCVDGDNWYRCECASGFAGPDCR) constitute an EGF-like 15; calcium-binding domain. The EGF-like 16; calcium-binding domain maps to 823–859 (NINECQSSPCAFGSTCVDEINGYRCLCPPGRTGPRCQ). The 43-residue stretch at 917 to 959 (TGQLCVPVRDEQCFVKPCSSQGECWSAHRPAVRTHCQPDSHCA) folds into the EGF-like 17 domain. Residues asparagine 960, asparagine 991, and asparagine 1046 are each glycosylated (N-linked (GlcNAc...) asparagine). A helical membrane pass occupies residues 1071–1095 (MVPLLVSVVTAIWVLALASVFLWCI). Residues 1096–1242 (RHHRKQSSSA…HSLQKMEYIV (147 aa)) lie on the Cytoplasmic side of the membrane. Residues 1191 to 1242 (RDDRLSSNGTDIKKHPQWTNKRDNRDLESQHRVPDSQHRDSQHSLQKMEYIV) are disordered. The span at 1210–1232 (NKRDNRDLESQHRVPDSQHRDSQ) shows a compositional bias: basic and acidic residues.

It is found in the membrane. Its subcellular location is the cell membrane. Its function is as follows. Ligand for multiple Notch receptors and involved in the mediation of Notch signaling. Seems to be involved in cell-fate decisions. In Danio rerio (Zebrafish), this protein is Protein jagged-1a (jag1a).